The following is a 1249-amino-acid chain: MAGE-like protein 2 (1249 aa).

The span at 1–10 shows a compositional bias: polar residues; sequence MSQLSKNLGD. Disordered regions lie at residues 1 to 50, 134 to 233, 300 to 327, 349 to 378, 410 to 433, 515 to 569, 647 to 679, 714 to 746, 862 to 910, and 930 to 957; these read MSQL…PPID, APGA…AQPP, QPPASGAPMAQPAAPPAQPMAPPAQPMA, PQVPQGPQAPPAQLATPPGWQATSPGWQAT, RQGPPPIRPGPPPIRPGPPPVRQA, QALP…LPAP, QPFQGAPPSQKAVQIQLPPQQAQASGPQAEVPT, LMTPSGECRASSIDRRGSSKERRTSSKERRAPS, PQAT…DWQG, and VSGDWEHPNTPRGLSGWEGPSTSRILSG. 2 stretches are compositionally biased toward pro residues: residues 40 to 49 and 140 to 233; these read PPVPWDPPPI and AHPP…AQPP. The span at 301–311 shows a compositional bias: low complexity; that stretch reads PPASGAPMAQP. Pro residues-rich tracts occupy residues 312–324 and 349–358; these read AAPPAQPMAPPAQ and PQVPQGPQAP. A compositionally biased stretch (polar residues) spans 369–378; the sequence is QATSPGWQAT. Positions 410-432 are enriched in pro residues; sequence RQGPPPIRPGPPPIRPGPPPVRQ. Positions 525 to 552 are enriched in low complexity; that stretch reads QAPQARLPAPQVQAAPQVPTAPPATQVP. Positions 553–567 are enriched in pro residues; that stretch reads AAPPAGPQVPQPVLP. Residues 662–675 show a composition bias toward low complexity; it reads QLPPQQAQASGPQA. A compositionally biased stretch (basic and acidic residues) spans 725 to 746; it reads SIDRRGSSKERRTSSKERRAPS. Residues 862-871 are compositionally biased toward low complexity; the sequence is PQATATTQEA. Residues 881–891 show a composition bias toward basic residues; sequence RSGKATRKKKH. One can recognise an MAGE domain in the interval 1020 to 1219; that stretch reads LDERANALVQ…QSWPFHYLEA (200 aa). The span at 1226–1235 shows a compositional bias: acidic residues; the sequence is EDTDEDEPDT. The disordered stretch occupies residues 1226-1249; that stretch reads EDTDEDEPDTGDSAHGPTSRPPPR.

Part of a complex consisting of MAGEL2, TRIM27 and USP7; directly interacts with USP7. Interacts with TRIM27. Interacts with VPS35; leading to recruitment at retromer-containing endosomes. Interacts with BMAL1 and PER2. In terms of tissue distribution, expressed in placenta, fetal and adult brain. Not detected in heart and small intestine, very low levels in fibroblasts. Not expressed in brain of a Prader-Willi patient.

The protein resides in the early endosome. It is found in the cytoplasm. Its subcellular location is the nucleus. In terms of biological role, probably enhances ubiquitin ligase activity of RING-type zinc finger-containing E3 ubiquitin-protein ligases, possibly through recruitment and/or stabilization of the Ubl-conjugating enzyme (E2) at the E3:substrate complex. Acts as a regulator of retrograde transport via its interaction with VPS35. Recruited to retromer-containing endosomes and promotes the formation of 'Lys-63'-linked polyubiquitin chains at 'Lys-220' of WASHC1 together with TRIM27, leading to promote endosomal F-actin assembly. Regulates the circadian clock by repressing the transcriptional activator activity of the CLOCK-BMAL1 heterodimer. Significantly promotes the cytoplasmic accumulation of CLOCK. This Homo sapiens (Human) protein is MAGE-like protein 2 (MAGEL2).